The sequence spans 311 residues: N-acetylmuramic acid 6-phosphate etherase (311 aa).

The SIS domain maps to 66-229 (VAVRMARGGR…STITMIRLGK (164 aa)). E94 functions as the Proton donor in the catalytic mechanism. Residue E125 is part of the active site.

It belongs to the GCKR-like family. MurNAc-6-P etherase subfamily. As to quaternary structure, homodimer.

It carries out the reaction N-acetyl-D-muramate 6-phosphate + H2O = N-acetyl-D-glucosamine 6-phosphate + (R)-lactate. It functions in the pathway amino-sugar metabolism; N-acetylmuramate degradation. Functionally, specifically catalyzes the cleavage of the D-lactyl ether substituent of MurNAc 6-phosphate, producing GlcNAc 6-phosphate and D-lactate. The sequence is that of N-acetylmuramic acid 6-phosphate etherase from Streptomyces coelicolor (strain ATCC BAA-471 / A3(2) / M145).